The following is a 185-amino-acid chain: Elongation factor P (185 aa).

The protein belongs to the elongation factor P family.

The protein localises to the cytoplasm. It participates in protein biosynthesis; polypeptide chain elongation. In terms of biological role, involved in peptide bond synthesis. Stimulates efficient translation and peptide-bond synthesis on native or reconstituted 70S ribosomes in vitro. Probably functions indirectly by altering the affinity of the ribosome for aminoacyl-tRNA, thus increasing their reactivity as acceptors for peptidyl transferase. In Burkholderia vietnamiensis (strain G4 / LMG 22486) (Burkholderia cepacia (strain R1808)), this protein is Elongation factor P.